A 549-amino-acid chain; its full sequence is Teichoic acids export ATP-binding protein TagH (549 aa).

Residues 22–243 (DKLKDLFRKQ…YRAFLKEYNQ (222 aa)) form the ABC transporter domain. An ATP-binding site is contributed by 57-64 (GLNGSGKS). The interval 244 to 549 (MSMEDRKKFQ…EIQSISIVKK (306 aa)) is unknown. Positions 346-415 (ENMYMVKSNG…VSTKFIEPFK (70 aa)) constitute an SH3b domain.

Belongs to the ABC transporter superfamily. Teichoic acids exporter (TC 3.A.1.104.1) family. The complex is composed of two ATP-binding proteins (TagH) and two transmembrane proteins (TagG).

Its subcellular location is the cell membrane. The enzyme catalyses ATP + H2O + teichoic acidSide 1 = ADP + phosphate + teichoic acidSide 2.. Part of the ABC transporter complex TagGH involved in teichoic acids export. Responsible for energy coupling to the transport system. In Bacillus cereus (strain ZK / E33L), this protein is Teichoic acids export ATP-binding protein TagH.